Reading from the N-terminus, the 397-residue chain is Decapping and exoribonuclease protein (397 aa).

Residues R58, E101, and 131 to 133 (WRG) contribute to the substrate site. E192 provides a ligand contact to Mg(2+). The substrate site is built by C217 and E234. Residues E234, D236, E253, and L254 each contribute to the Mg(2+) site. Substrate is bound by residues K255 and Q280. T392 carries the phosphothreonine modification. Phosphoserine is present on S394.

The protein belongs to the DXO/Dom3Z family. Requires Mg(2+) as cofactor.

The protein localises to the nucleus. It catalyses the reaction a 5'-end triphospho-ribonucleoside in mRNA + H2O = a 5'-end phospho-ribonucleoside in mRNA + diphosphate + H(+). It carries out the reaction a 5'-end NAD(+)-phospho-ribonucleoside in mRNA + H2O = a 5'-end phospho-ribonucleoside in mRNA + NAD(+) + H(+). The catalysed reaction is a 5'-end NAD(+)-phospho-ribonucleoside in snoRNA + H2O = a 5'-end phospho-ribonucleoside in snoRNA + NAD(+) + H(+). The enzyme catalyses a 5'-end (N(7)-methyl 5'-triphosphoguanosine)-ribonucleoside-ribonucleotide in mRNA + H2O = a (N(7)-methyl 5'-triphosphoguanosine)-nucleoside + a 5'-end phospho-ribonucleoside in mRNA + H(+). It catalyses the reaction a 5'-end FAD-phospho-ribonucleoside in mRNA + H2O = a 5'-end phospho-ribonucleoside in mRNA + FAD + H(+). It carries out the reaction a 5'-end CoA-ribonucleoside in mRNA + H2O = 3'-dephospho-CoA + a 5'-end phospho-ribonucleoside in mRNA + H(+). Decapping enzyme for NAD-capped RNAs: specifically hydrolyzes the nicotinamide adenine dinucleotide (NAD) cap from a subset of RNAs by removing the entire NAD moiety from the 5'-end of an NAD-capped RNA. The NAD-cap is present at the 5'-end of some RNAs and snoRNAs. In contrast to the canonical 5'-end N7 methylguanosine (m7G) cap, the NAD cap promotes mRNA decay. Preferentially acts on NAD-capped transcripts in response to environmental stress. Also acts as a non-canonical decapping enzyme that removes the entire cap structure of m7G capped or incompletely capped RNAs and mediates their subsequent degradation. Specifically degrades pre-mRNAs with a defective 5'-end m7G cap and is part of a pre-mRNA capping quality control. Has decapping activity toward incomplete 5'-end m7G cap mRNAs such as unmethylated 5'-end-capped RNA (cap0), while it has no activity toward 2'-O-ribose methylated m7G cap (cap1). In contrast to canonical decapping enzymes DCP2 and NUDT16, which cleave the cap within the triphosphate linkage, the decapping activity releases the entire cap structure GpppN and a 5'-end monophosphate RNA. Also has 5'-3' exoribonuclease activities: The 5'-end monophosphate RNA is then degraded by the 5'-3' exoribonuclease activity, enabling this enzyme to decap and degrade incompletely capped mRNAs. Also possesses RNA 5'-pyrophosphohydrolase activity by hydrolyzing the 5'-end triphosphate to release pyrophosphates. Exhibits decapping activity towards FAD-capped RNAs. Exhibits decapping activity towards dpCoA-capped RNAs in vitro. This Rattus norvegicus (Rat) protein is Decapping and exoribonuclease protein.